We begin with the raw amino-acid sequence, 203 residues long: Somatotropin (203 aa).

A signal peptide spans 1–17 (MDRVVIVLSVLSVAASS). Gln18 carries the post-translational modification Pyrrolidone carboxylic acid. A Zn(2+)-binding site is contributed by His35. Cys68 and Cys176 form a disulfide bridge. Zn(2+) is bound at residue Glu185. Cys193 and Cys201 are oxidised to a cystine.

Belongs to the somatotropin/prolactin family.

The protein resides in the secreted. Growth hormone plays an important role in growth control and is involved in the regulation of several anabolic processes. Implicated as an osmoregulatory substance important for seawater adaptation. The protein is Somatotropin (gh) of Solea senegalensis (Senegalese sole).